Reading from the N-terminus, the 548-residue chain is T-complex protein 1 subunit theta (548 aa).

A2 bears the N-acetylalanine mark. S23 is subject to Phosphoserine. Y30 bears the Phosphotyrosine mark. Y47 and G48 together coordinate ADP. D99 lines the Mg(2+) pocket. ADP-binding residues include G100, T101, N102, and F103. Positions 100, 101, and 102 each coordinate ATP. Position 162 is a phosphoserine (S162). Positions 169, 170, and 171 each coordinate ADP. Positions 170 and 171 each coordinate ATP. Glycyl lysine isopeptide (Lys-Gly) (interchain with G-Cter in SUMO2) cross-links involve residues K224, K254, and K260. S269 and S317 each carry phosphoserine. N6-acetyllysine is present on residues K318 and K400. Position 412 (G412) interacts with ADP. G412 contributes to the ATP binding site. Residue K459 forms a Glycyl lysine isopeptide (Lys-Gly) (interchain with G-Cter in SUMO1) linkage. The residue at position 466 (K466) is an N6-acetyllysine. D499 serves as a coordination point for ADP. ATP is bound by residues D499 and K504. The residue at position 505 (Y505) is a Phosphotyrosine. A disordered region spans residues 529-548 (PAGGPKPPSGKKDWDEDQND). A Glycyl lysine isopeptide (Lys-Gly) (interchain with G-Cter in SUMO2) cross-link involves residue K534. S537 bears the Phosphoserine mark. K539 participates in a covalent cross-link: Glycyl lysine isopeptide (Lys-Gly) (interchain with G-Cter in SUMO2).

The protein belongs to the TCP-1 chaperonin family. In terms of assembly, component of the chaperonin-containing T-complex (TRiC), a hexadecamer composed of two identical back-to-back stacked rings enclosing a protein folding chamber. Each ring is made up of eight different subunits: TCP1/CCT1, CCT2, CCT3, CCT4, CCT5, CCT6A/CCT6, CCT7, CCT8. Interacts with PACRG. Interacts with DNAAF4. Interacts with synaptic plasticity regulator PANTS.

It is found in the cytoplasm. The protein localises to the cytoskeleton. It localises to the microtubule organizing center. Its subcellular location is the centrosome. The protein resides in the cilium basal body. It carries out the reaction ATP + H2O = ADP + phosphate + H(+). In terms of biological role, component of the chaperonin-containing T-complex (TRiC), a molecular chaperone complex that assists the folding of actin, tubulin and other proteins upon ATP hydrolysis. The TRiC complex mediates the folding of WRAP53/TCAB1, thereby regulating telomere maintenance. As part of the TRiC complex may play a role in the assembly of BBSome, a complex involved in ciliogenesis regulating transports vesicles to the cilia. This chain is T-complex protein 1 subunit theta (CCT8), found in Bos taurus (Bovine).